A 559-amino-acid polypeptide reads, in one-letter code: Palmitoyltransferase AKR1 (559 aa).

ANK repeat units follow at residues 8-38 (QGFN…PVDT), 42-71 (LGHT…RVDT), and 75-104 (EGFT…DIKA). A run of 3 helical transmembrane segments spans residues 148 to 168 (LMVL…FLFG), 192 to 212 (TAVF…YLLG), and 217 to 237 (LLWM…FFYG). The region spanning 272 to 322 (HFCVSCIAQRPLRSKHCKFCNRCVAKFDHHCPWIYNCIGAKNHRAFLIFLA) is the DHHC domain. The S-palmitoyl cysteine intermediate role is filled by Cys-302. Helical transmembrane passes span 316–336 (AFLI…YLSF) and 373–393 (LAFW…VQLY).

This sequence belongs to the DHHC palmitoyltransferase family. AKR/ZDHHC17 subfamily.

It localises to the early endosome membrane. It is found in the golgi apparatus membrane. It carries out the reaction L-cysteinyl-[protein] + hexadecanoyl-CoA = S-hexadecanoyl-L-cysteinyl-[protein] + CoA. Palmitoyltransferase specific for casein kinase 1. In Mortierella alpina (Oleaginous fungus), this protein is Palmitoyltransferase AKR1.